The chain runs to 101 residues: NADH-quinone oxidoreductase subunit K (101 aa).

The next 3 helical transmembrane spans lie at 2–22, 28–48, and 62–82; these read TLSA…YGAL, VIVL…FVAF, and FALF…AALI.

The protein belongs to the complex I subunit 4L family. In terms of assembly, NDH-1 is composed of 14 different subunits. Subunits NuoA, H, J, K, L, M, N constitute the membrane sector of the complex.

The protein localises to the cell membrane. It carries out the reaction a quinone + NADH + 5 H(+)(in) = a quinol + NAD(+) + 4 H(+)(out). Functionally, NDH-1 shuttles electrons from NADH, via FMN and iron-sulfur (Fe-S) centers, to quinones in the respiratory chain. The immediate electron acceptor for the enzyme in this species is believed to be a menaquinone. Couples the redox reaction to proton translocation (for every two electrons transferred, four hydrogen ions are translocated across the cytoplasmic membrane), and thus conserves the redox energy in a proton gradient. In Geobacillus kaustophilus (strain HTA426), this protein is NADH-quinone oxidoreductase subunit K.